A 265-amino-acid chain; its full sequence is MSPAEPTREESVYKAKLAEQAERYEEMVEYMERVARAAGGASGGEELTVEERNLLSVAYKNVIGARRASWRIISSIEQKEEGRGNDAHAATIRSYRGKIEAELARICDGILALLDSHLVPSAGAAESKVFYLKMKGDYHRYLAEFKSGDERKQAAESTMNAYKAAQDIALADLAPTHPIRLGLALNFSVFYYEILNSPDRACNLAKQAFDEAISELDSLGEESYKDSTLIMQLLRDNLTLWTSDANDDGGDEIKEAAAPKEPGDQ.

The tract at residues aspartate 244–glutamine 265 is disordered. Basic and acidic residues predominate over residues aspartate 251–glutamine 265.

It belongs to the 14-3-3 family. In terms of assembly, interacts with BZR1. Interacts with ABI5.

In terms of biological role, is associated with a DNA binding complex that binds to the G box, a well-characterized cis-acting DNA regulatory element found in plant genes. The chain is 14-3-3-like protein GF14-D (GF14D) from Oryza sativa subsp. japonica (Rice).